The sequence spans 209 residues: V-type ATP synthase subunit D (209 aa).

This sequence belongs to the V-ATPase D subunit family.

In terms of biological role, produces ATP from ADP in the presence of a proton gradient across the membrane. The polypeptide is V-type ATP synthase subunit D (Thermoanaerobacter pseudethanolicus (strain ATCC 33223 / 39E) (Clostridium thermohydrosulfuricum)).